Reading from the N-terminus, the 368-residue chain is tRNA(Met) cytidine acetate ligase (368 aa).

Residues 7–20 (IAEFNPFHNGHKYL), Gly-96, Asn-152, and Arg-175 each bind ATP.

Belongs to the TmcAL family.

The protein localises to the cytoplasm. It catalyses the reaction cytidine(34) in elongator tRNA(Met) + acetate + ATP = N(4)-acetylcytidine(34) in elongator tRNA(Met) + AMP + diphosphate. Catalyzes the formation of N(4)-acetylcytidine (ac(4)C) at the wobble position of elongator tRNA(Met), using acetate and ATP as substrates. First activates an acetate ion to form acetyladenylate (Ac-AMP) and then transfers the acetyl group to tRNA to form ac(4)C34. This Streptococcus pyogenes serotype M3 (strain SSI-1) protein is tRNA(Met) cytidine acetate ligase.